A 155-amino-acid chain; its full sequence is MSRRGTAEKKKAKSDPIYRNRLVNMLVNRILKHGKKSLAYQIMYRAVKTIQQNTEKNPLSVLRQAIRGVTPDLTVKARRVSGSTHQVPIEIRSTQGKALAVRWLLAASRKRPGRDMAFKLSSELVDAAKGRGDAIRKKEETHRMAEANRAFAHFR.

It belongs to the universal ribosomal protein uS7 family. As to quaternary structure, part of the 30S ribosomal subunit.

The protein resides in the plastid. One of the primary rRNA binding proteins, it binds directly to 16S rRNA where it nucleates assembly of the head domain of the 30S subunit. In Cuscuta obtusiflora (Peruvian dodder), this protein is Small ribosomal subunit protein uS7cz/uS7cy (rps7-A).